The following is a 755-amino-acid chain: von Willebrand factor A domain-containing protein 2 (755 aa).

An N-terminal signal peptide occupies residues 1–23 (MPPFLLLEAVCVFLFSRVPPSLP). The VWFA 1 domain maps to 51–222 (DIMFLLDGSN…DATNGLFSTL (172 aa)). A glycan (N-linked (GlcNAc...) asparagine) is linked at Asn147. Residues 296–333 (PGPCDSQPCQNGGTCVPEGLDGYQCLCPLAFGGEANCA) form the EGF-like 1 domain. Intrachain disulfides connect Cys299/Cys310, Cys304/Cys320, and Cys322/Cys332. VWFA domains lie at 343–517 (DLLF…QGKL) and 531–705 (DLVF…IEWL). The EGF-like 2 domain occupies 712 to 748 (PVNLCKPSPCMNEGSCVLQNGSYRCKCRDGWEGPHCE). 3 disulfide bridges follow: Cys716-Cys727, Cys721-Cys736, and Cys738-Cys747.

Forms monomers and multimers. Post-translationally, a 55 kDa form is produced by proteolytic cleavage. In terms of tissue distribution, expression is generally absent in normal colon and other normal body tissues, but it is induced an average of 78-fold in Stage II, III, and IV colon cancers, as well as in colon adenomas and colon cancer cell lines.

It localises to the secreted. In Homo sapiens (Human), this protein is von Willebrand factor A domain-containing protein 2 (VWA2).